An 862-amino-acid polypeptide reads, in one-letter code: Protein translocase subunit SecA (862 aa).

Residues Q86, G104–T108, and D499 contribute to the ATP site. Positions 848, 850, 859, and 860 each coordinate Zn(2+).

It belongs to the SecA family. Monomer and homodimer. Part of the essential Sec protein translocation apparatus which comprises SecA, SecYEG and auxiliary proteins SecDF-YajC and YidC. The cofactor is Zn(2+).

The protein resides in the cell inner membrane. The protein localises to the cytoplasm. It catalyses the reaction ATP + H2O + cellular proteinSide 1 = ADP + phosphate + cellular proteinSide 2.. Part of the Sec protein translocase complex. Interacts with the SecYEG preprotein conducting channel. Has a central role in coupling the hydrolysis of ATP to the transfer of proteins into and across the cell membrane, serving both as a receptor for the preprotein-SecB complex and as an ATP-driven molecular motor driving the stepwise translocation of polypeptide chains across the membrane. This is Protein translocase subunit SecA from Ehrlichia chaffeensis (strain ATCC CRL-10679 / Arkansas).